Here is a 217-residue protein sequence, read N- to C-terminus: Coiled-coil domain-containing protein 124-B (217 aa).

Residues 1–123 (MPKKFQSENT…EKPKTHLEIP (123 aa)) are disordered. Composition is skewed to basic and acidic residues over residues 18–45 (RKAE…DDKH), 52–74 (RKEE…QRLL), and 98–123 (QIEE…LEIP). The stretch at 41–83 (DDDKHVVRKEHRKEEKEKKRLELLERKKESQRLLDEEDSKMKG) forms a coiled coil.

This sequence belongs to the CCDC124 family. In terms of assembly, associates with translationally inactive ribosomes in the nonrotated state.

It is found in the cytoplasm. The protein localises to the cytoskeleton. The protein resides in the microtubule organizing center. It localises to the centrosome. Its subcellular location is the midbody. Functionally, ribosome-binding protein involved in ribosome hibernation: associates with translationally inactive ribosomes and stabilizes the nonrotated conformation of the 80S ribosome, thereby promoting ribosome preservation and storage. This chain is Coiled-coil domain-containing protein 124-B (ccdc124-b), found in Xenopus laevis (African clawed frog).